We begin with the raw amino-acid sequence, 376 residues long: Succinyl-diaminopimelate desuccinylase (376 aa).

Position 66 (histidine 66) interacts with Zn(2+). Aspartate 68 is a catalytic residue. Aspartate 99 serves as a coordination point for Zn(2+). Glutamate 133 functions as the Proton acceptor in the catalytic mechanism. Residues glutamate 134, glutamate 162, and histidine 348 each coordinate Zn(2+).

This sequence belongs to the peptidase M20A family. DapE subfamily. Homodimer. The cofactor is Zn(2+). Co(2+) is required as a cofactor.

The enzyme catalyses N-succinyl-(2S,6S)-2,6-diaminopimelate + H2O = (2S,6S)-2,6-diaminopimelate + succinate. It functions in the pathway amino-acid biosynthesis; L-lysine biosynthesis via DAP pathway; LL-2,6-diaminopimelate from (S)-tetrahydrodipicolinate (succinylase route): step 3/3. Catalyzes the hydrolysis of N-succinyl-L,L-diaminopimelic acid (SDAP), forming succinate and LL-2,6-diaminopimelate (DAP), an intermediate involved in the bacterial biosynthesis of lysine and meso-diaminopimelic acid, an essential component of bacterial cell walls. The protein is Succinyl-diaminopimelate desuccinylase of Xanthomonas oryzae pv. oryzae (strain MAFF 311018).